A 218-amino-acid polypeptide reads, in one-letter code: Octanoyltransferase (218 aa).

Residues 31-207 (AQTPDELWLL…QLAAQLGYAE (177 aa)) enclose the BPL/LPL catalytic domain. Residues 70 to 77 (RGGQVTYH), 137 to 139 (SLG), and 150 to 152 (GLA) each bind substrate. The active-site Acyl-thioester intermediate is the C168.

The protein belongs to the LipB family.

It is found in the cytoplasm. It carries out the reaction octanoyl-[ACP] + L-lysyl-[protein] = N(6)-octanoyl-L-lysyl-[protein] + holo-[ACP] + H(+). Its pathway is protein modification; protein lipoylation via endogenous pathway; protein N(6)-(lipoyl)lysine from octanoyl-[acyl-carrier-protein]: step 1/2. Catalyzes the transfer of endogenously produced octanoic acid from octanoyl-acyl-carrier-protein onto the lipoyl domains of lipoate-dependent enzymes. Lipoyl-ACP can also act as a substrate although octanoyl-ACP is likely to be the physiological substrate. The chain is Octanoyltransferase from Azotobacter vinelandii (strain DJ / ATCC BAA-1303).